The sequence spans 206 residues: Urease accessory protein UreG (206 aa).

13 to 20 (GPVGSGKT) is a binding site for GTP.

This sequence belongs to the SIMIBI class G3E GTPase family. UreG subfamily. As to quaternary structure, homodimer. UreD, UreF and UreG form a complex that acts as a GTP-hydrolysis-dependent molecular chaperone, activating the urease apoprotein by helping to assemble the nickel containing metallocenter of UreC. The UreE protein probably delivers the nickel.

It localises to the cytoplasm. Facilitates the functional incorporation of the urease nickel metallocenter. This process requires GTP hydrolysis, probably effectuated by UreG. The protein is Urease accessory protein UreG of Natronomonas pharaonis (strain ATCC 35678 / DSM 2160 / CIP 103997 / JCM 8858 / NBRC 14720 / NCIMB 2260 / Gabara) (Halobacterium pharaonis).